The primary structure comprises 178 residues: MIVAVGTKNPNKIRAVEDAYRLFGIPARIVPAPRPLTTPPQPVGLEAVLKGAVERAKAALQAVEKAEHGVGIEAGVVEAGGVHLDITIAAIVDAGGRTTIGFGPAFQIPPPFLSQVLSGVEMGAVAEQYFKRPSIGYREGLIGVLTKRRVTRYHLNLAAVAMALTPRLPHNSQLYLKP.

It belongs to the YjjX NTPase family. As to quaternary structure, homodimer. The cofactor is Mg(2+). Mn(2+) serves as cofactor.

It catalyses the reaction XTP + H2O = XDP + phosphate + H(+). The enzyme catalyses ITP + H2O = IDP + phosphate + H(+). In terms of biological role, phosphatase that hydrolyzes non-canonical purine nucleotides such as XTP and ITP to their respective diphosphate derivatives. Probably excludes non-canonical purines from DNA/RNA precursor pool, thus preventing their incorporation into DNA/RNA and avoiding chromosomal lesions. In Pyrobaculum aerophilum (strain ATCC 51768 / DSM 7523 / JCM 9630 / CIP 104966 / NBRC 100827 / IM2), this protein is Probable inosine/xanthosine triphosphatase.